The primary structure comprises 1438 residues: DNA polymerase III PolC-type (1438 aa).

The Exonuclease domain maps to 422–578 (YVVFDVETTG…YDTEATAYIF (157 aa)).

It belongs to the DNA polymerase type-C family. PolC subfamily.

The protein localises to the cytoplasm. It catalyses the reaction DNA(n) + a 2'-deoxyribonucleoside 5'-triphosphate = DNA(n+1) + diphosphate. In terms of biological role, required for replicative DNA synthesis. This DNA polymerase also exhibits 3' to 5' exonuclease activity. The sequence is that of DNA polymerase III PolC-type from Staphylococcus aureus (strain MRSA252).